The sequence spans 1307 residues: CRISPR-associated endonuclease Cas12a (1307 aa).

Positions 1 to 35 (MTQFEGFTNLYQVSKTLRFELIPQGKTLKHIQEQG) are WED-I (OBD-I). The segment at 36-320 (FIEEDKARND…SDRNTLSFIL (285 aa)) is REC1 (helical-I). CrRNA is bound at residue 47 to 51 (YKELK). The stretch at 74 to 106 (ENLSAAIDSYRKEKTEETRNALIEEQATYRNAI) forms a coiled coil. CrRNA contacts are provided by residues 175–176 (NR) and 307–310 (KQIL). The WED-II (helical-II) stretch occupies residues 321–526 (EEFKSDEEVI…ARNYATKKPY (206 aa)). The tract at residues 527–598 (SVEKFKLNFQ…GFDKMYYDYF (72 aa)) is WED-II (OBD-I). A DNA-binding region (PAM-binding on target DNA) is located at residues 599–607 (PDAAKMIPK). Residues 599 to 718 (PDAAKMIPKC…EYYAELNPLL (120 aa)) are PI (LHD). The tract at residues 719–884 (YHISFQRIAE…ITLNYQAANS (166 aa)) is WED-III (OBD-III). Position 752–761 (752–761 (KGHHGKPNLH)) interacts with crRNA. Positions 780–783 (KLNG) form a DNA-binding region, target DNA. His-800 (for pre-crRNA processing) is an active-site residue. 806–808 (MLN) is a binding site for crRNA. Catalysis depends on for pre-crRNA processing residues Lys-809 and Lys-860. The interval 885-940 (PSKFNQRVNAYLKEHPETPIIGIDRGERNLIYITVIDSTGKILEQRSLNTIQQFDY) is ruvC-I. Catalysis depends on Asp-908, which acts as the For DNase activity of RuvC domain. Residues 941 to 957 (QKKLDNREKERVAARQA) are bridge helix. The segment at residues 951–968 (RVAARQAWSVVGTIKDLK) is a DNA-binding region (target DNA). The interval 958–1066 (WSVVGTIKDL…TQSGFLFYVP (109 aa)) is ruvC-II. The active-site For DNase activity of RuvC domain is Glu-993. Residues 1051–1053 (SFA) constitute a DNA-binding region (target DNA). A nuclease domain region spans residues 1067–1262 (APYTSKIDPL…FQNPEWPMDA (196 aa)). Arg-1226 (for DNase activity of nuclease domain) is an active-site residue. The active-site For DNase activity of RuvC domain is the Asp-1263. The tract at residues 1263–1307 (DANGAYHIALKGQLLLNHLKESKDLKLQNGISNQDWLAYIQELRN) is ruvC-III.

This sequence belongs to the CRISPR-associated endonuclease Cas12a family. As to quaternary structure, monomer. Requires Mg(2+) as cofactor.

The enzyme catalyses Endonucleolytic cleavage to 5'-phosphodinucleotide and 5'-phosphooligonucleotide end-products.. It carries out the reaction RNA = a 5'-hydroxy-ribonucleotide + n nucleoside-2',3'-cyclophosphates.. CRISPR (clustered regularly interspaced short palindromic repeat), is an adaptive immune system that provides protection against mobile genetic elements (viruses, transposable elements and conjugative plasmids). CRISPR clusters contain sequences complementary to antecedent mobile elements and target invading nucleic acids. CRISPR clusters are transcribed and processed into CRISPR RNA (crRNA). Recognizes a short motif in the CRISPR repeat sequences (the 5' PAM or protospacer adjacent motif, TTTN in this organism) to help distinguish self versus nonself, as targets within the bacterial CRISPR locus do not have PAMs. Has dsDNA endonuclease activity, results in staggered 4-base 5' overhangs 19 and 22 bases downstream of the PAM on the non-targeted and targeted strand respectively. Non-target strand cleavage by the RuvC domain is probably a prerequisite of target strand cleavage by the Nuc domain. Protects E.coli against plasmids and bacteriophage M13mp18, phage T4 with hydroxymethyl or unmodified (but not glycosylated) cytosines and to a lesser extent against lambda and VpaE1 phage. In this CRISPR system correct processing of pre-crRNA requires only this protein and the CRISPR locus. This chain is CRISPR-associated endonuclease Cas12a, found in Acidaminococcus sp. (strain BV3L6).